The primary structure comprises 558 residues: Membrane protein insertase YidC (558 aa).

5 consecutive transmembrane segments (helical) span residues 3–23, 364–384, 438–458, 477–497, and 508–528; these read IKRT…FDNW, FVGN…AVFF, LPVV…LASV, PYFI…KLNP, and MMFM…GLVL.

Belongs to the OXA1/ALB3/YidC family. Type 1 subfamily. Interacts with the Sec translocase complex via SecD. Specifically interacts with transmembrane segments of nascent integral membrane proteins during membrane integration.

It is found in the cell inner membrane. Required for the insertion and/or proper folding and/or complex formation of integral membrane proteins into the membrane. Involved in integration of membrane proteins that insert both dependently and independently of the Sec translocase complex, as well as at least some lipoproteins. Aids folding of multispanning membrane proteins. The polypeptide is Membrane protein insertase YidC (Burkholderia mallei (strain NCTC 10247)).